The sequence spans 551 residues: Glutamate--tRNA ligase (551 aa).

The short motif at Pro100–Ser110 is the 'HIGH' region element.

It belongs to the class-I aminoacyl-tRNA synthetase family. Glutamate--tRNA ligase type 2 subfamily.

Its subcellular location is the cytoplasm. It catalyses the reaction tRNA(Glu) + L-glutamate + ATP = L-glutamyl-tRNA(Glu) + AMP + diphosphate. Functionally, catalyzes the attachment of glutamate to tRNA(Glu) in a two-step reaction: glutamate is first activated by ATP to form Glu-AMP and then transferred to the acceptor end of tRNA(Glu). The chain is Glutamate--tRNA ligase from Archaeoglobus fulgidus (strain ATCC 49558 / DSM 4304 / JCM 9628 / NBRC 100126 / VC-16).